The primary structure comprises 326 residues: Target of rapamycin complex subunit LST8 (326 aa).

An N-acetylmethionine modification is found at M1. WD repeat units lie at residues 1-37 (MNTT…CTRT), 40-80 (HQDS…PIIS), 83-122 (GVSK…LQCQ), 126-165 (QVNA…NEQL), and 168-207 (EPEF…GDEV). A Phosphothreonine modification is found at T51. A Glycyl lysine isopeptide (Lys-Gly) (interchain with G-Cter in SUMO3) cross-link involves residue K86. Residues K215, K245, and K261 each participate in a glycyl lysine isopeptide (Lys-Gly) (interchain with G-Cter in SUMO3) cross-link. A WD 6 repeat occupies 218–257 (AHTRYALQCRFSPDSTLLATCSADQTCKIWRTSNFSLMTE). A WD 7 repeat occupies 268-309 (SSRGWMWGCAFSGDSQYIVTASSDNLARLWCVETGEIKREYG). K305 is covalently cross-linked (Glycyl lysine isopeptide (Lys-Gly) (interchain with G-Cter in SUMO3); alternate). Residues K305 and K313 each participate in a glycyl lysine isopeptide (Lys-Gly) (interchain with G-Cter in ubiquitin); alternate cross-link. A Glycyl lysine isopeptide (Lys-Gly) (interchain with G-Cter in SUMO1); alternate cross-link involves residue K313.

Belongs to the WD repeat LST8 family. As to quaternary structure, part of the mechanistic target of rapamycin complex 1 (mTORC1) which contains MTOR, MLST8 and RPTOR. mTORC1 associates with AKT1S1/PRAS40, which inhibits its activity. mTORC1 binds to and is inhibited by FKBP12-rapamycin. Within mTORC1, interacts directly with MTOR and RPTOR. Component of the mechanistic target of rapamycin complex 2 (mTORC2), consisting in two heterotretramers composed of MTOR, MLST8, RICTOR and MAPKAP1/SIN1. Contrary to mTORC1, mTORC2 does not bind to and is not sensitive to FKBP12-rapamycin. mTORC1 and mTORC2 associate with DEPTOR, which regulates their activity. Interacts with RHEB. Interacts with MEAK7. Interacts with SIK3. Interacts with SLC38A7; this interaction promotes the recruitment of mTORC1 to the lysosome and its subsequent activation. Phosphorylation at Thr-51 by CDK1 promotes ubiquitination by the SCF(FBXW7) complex, followed by degradation. Post-translationally, ubiquitination by the SCF(FBXW7) and SCF(FBXW11) complexes following phosphorylation at Thr-51 by CDK1, leads to its degradation by the proteasome. Ubiquitination at Lys-305 and Lys-313 by TRAF2 via 'Lys-63'-linked polyubiquitin chains inhibits formation of the mTORC2 complex, while promoting formation of the mTORC1 complex: ubiquitination disrupts the interaction between MLST8 and MAPKAP1/SIN1 to favor mTORC1 assembly. Deubiquitination at Lys-305 and Lys-313 by OTUD7B promotes MLST8 interaction with MAPKAP1/SIN1, facilitating mTORC2 assembly. In terms of processing, sumoylation with SUMO1, SUMO2 and SUMO3 promotes assembly of both mTORC1 and mTORC2 complexes. In terms of tissue distribution, expressed at highest levels in the brain and testis, followed by lung, heart, kidney, skeletal muscle, spleen and liver. Also expressed in epididymal, abdominal and brown fat, small intestine and pancreas.

The protein resides in the lysosome membrane. It is found in the cytoplasm. Subunit of both mTORC1 and mTORC2, which regulates cell growth and survival in response to nutrient and hormonal signals. mTORC1 is activated in response to growth factors or amino acids. In response to nutrients, mTORC1 is recruited to the lysosome membrane and promotes protein, lipid and nucleotide synthesis by phosphorylating several substrates, such as ribosomal protein S6 kinase (RPS6KB1 and RPS6KB2) and EIF4EBP1 (4E-BP1). In the same time, it inhibits catabolic pathways by phosphorylating the autophagy initiation components ULK1 and ATG13, as well as transcription factor TFEB, a master regulators of lysosomal biogenesis and autophagy. The mTORC1 complex is inhibited in response to starvation and amino acid depletion. Within mTORC1, MLST8 interacts directly with MTOR and enhances its kinase activity. In nutrient-poor conditions, stabilizes the MTOR-RPTOR interaction and favors RPTOR-mediated inhibition of MTOR activity. As part of the mTORC2 complex, transduces signals from growth factors to pathways involved in proliferation, cytoskeletal organization, lipogenesis and anabolic output. mTORC2 is also activated by growth factors, but seems to be nutrient-insensitive. In response to growth factors, mTORC2 phosphorylates and activates AGC protein kinase family members, including AKT (AKT1, AKT2 and AKT3), PKC (PRKCA, PRKCB and PRKCE) and SGK1. mTORC2 functions upstream of Rho GTPases to regulate the actin cytoskeleton, probably by activating one or more Rho-type guanine nucleotide exchange factors. mTORC2 promotes the serum-induced formation of stress-fibers or F-actin. mTORC2 plays a critical role in AKT1 activation by mediating phosphorylation of different sites depending on the context, such as 'Thr-450', 'Ser-473', 'Ser-477' or 'Thr-479', facilitating the phosphorylation of the activation loop of AKT1 on 'Thr-308' by PDPK1/PDK1 which is a prerequisite for full activation. mTORC2 regulates the phosphorylation of SGK1 at 'Ser-422'. mTORC2 also modulates the phosphorylation of PRKCA on 'Ser-657'. Within mTORC2, MLST8 acts as a bridge between MAPKAP1/SIN1 and MTOR. This is Target of rapamycin complex subunit LST8 from Rattus norvegicus (Rat).